The primary structure comprises 236 residues: Transcriptional activator protein SolR (236 aa).

An HTH luxR-type domain is found at 169 to 234 (VPESNAVLTT…QAVVKAIATG (66 aa)). The H-T-H motif DNA-binding region spans 193 to 212 (AYEIGQILRISERTVNFHVN).

The protein belongs to the autoinducer-regulated transcriptional regulatory protein family.

This is Transcriptional activator protein SolR (solR) from Ralstonia solanacearum (Pseudomonas solanacearum).